The primary structure comprises 360 residues: (+)-6a-hydroxymaackiain 3-O-methyltransferase 2 (360 aa).

S-adenosyl-L-methionine is bound by residues 202–205, D226, 226–227, 246–247, and K260; these read VAGG, DQ, and DM. Catalysis depends on H264, which acts as the Proton acceptor.

The protein belongs to the class I-like SAM-binding methyltransferase superfamily. Cation-independent O-methyltransferase family. COMT subfamily.

The enzyme catalyses (+)-6a-hydroxymaackiain + S-adenosyl-L-methionine = (+)-pisatin + S-adenosyl-L-homocysteine + H(+). In terms of biological role, 3-O-methyltransferase involved in the phytoalexin pisatin biosynthesis. Can use (+)-6a-hydroxymaackiain, (+)-maackiain and with a lower activity (+)-medicarpin and 2,7,4'-trihydroxyisoflavanone as substrates, but not (-)-6a-hydroxymaackiain, daidzein, formononetin or isoliquiritigenin. The polypeptide is (+)-6a-hydroxymaackiain 3-O-methyltransferase 2 (HMM2) (Pisum sativum (Garden pea)).